The primary structure comprises 71 residues: Large ribosomal subunit protein bL31 (71 aa).

Cys-16, Cys-18, Cys-37, and Cys-40 together coordinate Zn(2+).

The protein belongs to the bacterial ribosomal protein bL31 family. Type A subfamily. Part of the 50S ribosomal subunit. Zn(2+) is required as a cofactor.

Functionally, binds the 23S rRNA. The chain is Large ribosomal subunit protein bL31 from Nitratidesulfovibrio vulgaris (strain DSM 19637 / Miyazaki F) (Desulfovibrio vulgaris).